The chain runs to 246 residues: Homeobox protein SIX6 (246 aa).

The segment at residues 126–186 (WDGEQKTHCF…KNRRQRDRAA (61 aa)) is a DNA-binding region (homeobox). Positions 190-246 (NRLQQQVLSQGPGRVLRSEGEGTPEVLGVASSPAASLSSKAATSAISITSSDSECDI) are disordered. Thr212 carries the phosphothreonine modification. Over residues 219–246 (ASSPAASLSSKAATSAISITSSDSECDI) the composition is skewed to low complexity. Phosphoserine occurs at positions 221, 225, 227, and 228.

Belongs to the SIX/Sine oculis homeobox family. Interacts with TLE4 and TLE5. In the developing embryo, expressed mainly in the ventral optic stalk, optic chiasma, the neural retina and the primordial tissues that give rise to the pituitary/hypothalamus axis. Not expressed in the lens placode.

It localises to the nucleus. In terms of biological role, may be involved in eye development. The sequence is that of Homeobox protein SIX6 (Six6) from Mus musculus (Mouse).